We begin with the raw amino-acid sequence, 197 residues long: Thymidine kinase (197 aa).

ATP is bound by residues 15–22 and 93–96; these read GPMFAGKT and DEVQ. Catalysis depends on Glu94, which acts as the Proton acceptor. Residues Cys150, Cys153, Cys188, and His191 each contribute to the Zn(2+) site.

This sequence belongs to the thymidine kinase family. In terms of assembly, homotetramer.

The protein localises to the cytoplasm. It catalyses the reaction thymidine + ATP = dTMP + ADP + H(+). The polypeptide is Thymidine kinase (Thermococcus kodakarensis (strain ATCC BAA-918 / JCM 12380 / KOD1) (Pyrococcus kodakaraensis (strain KOD1))).